The following is a 464-amino-acid chain: tRNA(Ile)-lysidine synthase (464 aa).

26 to 31 (SGGPDS) contributes to the ATP binding site.

The protein belongs to the tRNA(Ile)-lysidine synthase family.

It localises to the cytoplasm. It carries out the reaction cytidine(34) in tRNA(Ile2) + L-lysine + ATP = lysidine(34) in tRNA(Ile2) + AMP + diphosphate + H(+). Ligates lysine onto the cytidine present at position 34 of the AUA codon-specific tRNA(Ile) that contains the anticodon CAU, in an ATP-dependent manner. Cytidine is converted to lysidine, thus changing the amino acid specificity of the tRNA from methionine to isoleucine. The chain is tRNA(Ile)-lysidine synthase from Geobacillus kaustophilus (strain HTA426).